The chain runs to 334 residues: Aspartate carbamoyltransferase catalytic subunit (334 aa).

Residues Arg-71 and Thr-72 each contribute to the carbamoyl phosphate site. Lys-99 serves as a coordination point for L-aspartate. Residues Arg-121, His-151, and Gln-154 each coordinate carbamoyl phosphate. L-aspartate-binding residues include Arg-184 and Arg-239. Carbamoyl phosphate-binding residues include Gly-280 and Pro-281.

Belongs to the aspartate/ornithine carbamoyltransferase superfamily. ATCase family. In terms of assembly, heterododecamer (2C3:3R2) of six catalytic PyrB chains organized as two trimers (C3), and six regulatory PyrI chains organized as three dimers (R2).

The catalysed reaction is carbamoyl phosphate + L-aspartate = N-carbamoyl-L-aspartate + phosphate + H(+). It participates in pyrimidine metabolism; UMP biosynthesis via de novo pathway; (S)-dihydroorotate from bicarbonate: step 2/3. Functionally, catalyzes the condensation of carbamoyl phosphate and aspartate to form carbamoyl aspartate and inorganic phosphate, the committed step in the de novo pyrimidine nucleotide biosynthesis pathway. This chain is Aspartate carbamoyltransferase catalytic subunit, found in Pseudomonas fluorescens biotype A.